The chain runs to 452 residues: Ribulose bisphosphate carboxylase large chain (452 aa).

Positions 1–2 (MS) are excised as a propeptide. The residue at position 3 (P3) is an N-acetylproline. K14 carries the N6,N6,N6-trimethyllysine modification. Positions 123 and 173 each coordinate substrate. The Proton acceptor role is filled by K175. K177 contacts substrate. 3 residues coordinate Mg(2+): K201, D203, and E204. At K201 the chain carries N6-carboxylysine. Residue H294 is the Proton acceptor of the active site. R295, X327, and S379 together coordinate substrate.

The protein belongs to the RuBisCO large chain family. Type I subfamily. Heterohexadecamer of 8 large chains and 8 small chains; disulfide-linked. The disulfide link is formed within the large subunit homodimers. Requires Mg(2+) as cofactor. Post-translationally, the disulfide bond which can form in the large chain dimeric partners within the hexadecamer appears to be associated with oxidative stress and protein turnover.

The protein localises to the plastid. The protein resides in the chloroplast. It carries out the reaction 2 (2R)-3-phosphoglycerate + 2 H(+) = D-ribulose 1,5-bisphosphate + CO2 + H2O. The enzyme catalyses D-ribulose 1,5-bisphosphate + O2 = 2-phosphoglycolate + (2R)-3-phosphoglycerate + 2 H(+). Functionally, ruBisCO catalyzes two reactions: the carboxylation of D-ribulose 1,5-bisphosphate, the primary event in carbon dioxide fixation, as well as the oxidative fragmentation of the pentose substrate in the photorespiration process. Both reactions occur simultaneously and in competition at the same active site. In Salvadora persica (Toothbrush tree), this protein is Ribulose bisphosphate carboxylase large chain.